The following is an 886-amino-acid chain: MGARCRSFSALLLLLQVSSWLCQQPESESDSCRPGFSSEVYTFLVPERHLERGHILGRVKFEGCTGRPRTAFFSEDSRFKVSTDGVITVKRHLKLHKLETSFLVHAWDSSYRKLSTKVTLKSLGHHHHRHHHRDPVSESNPELLTFPSFHQGLRRQKRDWVIPPINCPENQKGEFPQRLVQIKSNRDKETTVFYSITGPGADKPPVGVFIIERETGWLKVTQPLDREAIDKYLLYSHAVSSNGEAVEDPMEIVVTVTDQNDNRPEFIQEVFEGSVAEGALPGTSVMQVSATDADDDINTYNAAIAYTILSQDPELPHKNMFTVNRDTGVISVVTSGLDRESYPTYTLVVQAADLQGEGLSTTAKAVITVKDINDNAPIFNPSTYQGQVLENEVGARIATLKVTDDDAPNTPAWNAVYTVVNDPDHQFTVITDPKTNEGILKTAKGLDFEAKQQYILHVTVENEEPFEGSLVPSTATVTVDVVDVNEAPIFVPAEKRVEVPEDFGVGLEIASYTAREPDTFMEQKITYRIWRDTANWLEINPETGVISTRAEMDREDSEHVKNSTYTALIIATDDGSPIATGTGTLLLVLSDVNDNAPIPEPRNMQFCQRNPKPHVITILDPDLPPNTSPFTAELTHGASVNWTIEYNDAEQESLILQPRKDLEIGEYKINLKLSDNQNKDQVTTLEVHVCDCEGTVNNCMKAISLEAGLQVPAILGILGGILALLILILLLLLFLRRRTVVKEPLLPPDDDTRDNVYYYDEEGGGEEDQDFDLSQLHRGLDARPEVIRNDVAPTLMSMPQYRPRPANPDEIGNFIDENLKAADSDPTAPPYDSLLVFDYEGSGSEAASLSSLNSSESDQDQDYDYLNEWGNRFKKLADMYGGGEED.

Positions 1–23 (MGARCRSFSALLLLLQVSSWLCQ) are cleaved as a signal peptide. A propeptide spanning residues 24–158 (QPESESDSCR…FHQGLRRQKR (135 aa)) is cleaved from the precursor. Over 24 to 713 (QPESESDSCR…SLEAGLQVPA (690 aa)) the chain is Extracellular. 5 consecutive Cadherin domains span residues 159–266 (DWVI…RPEF), 267–379 (IQEV…APIF), 380–490 (NPST…APIF), 491–597 (VPAE…DNAP), and 598–701 (IPEP…NCMK). Residue Asp261 participates in Ca(2+) binding. O-linked (Man...) serine glycans are attached at residues Ser284 and Ser289. Asp292 is a Ca(2+) binding site. Thr362, Thr474, Thr476, and Thr513 each carry an O-linked (Man...) threonine glycan. N-linked (GlcNAc...) asparagine glycosylation occurs at Asn562. O-linked (Man...) threonine glycosylation is found at Thr580, Thr582, and Thr584. A glycan (N-linked (GlcNAc...) asparagine) is linked at Asn641. A helical transmembrane segment spans residues 714–734 (ILGILGGILALLILILLLLLF). The Cytoplasmic segment spans residues 735–886 (LRRRTVVKEP…ADMYGGGEED (152 aa)). Residues 751 to 771 (DTRDNVYYYDEEGGGEEDQDF) form a disordered region. Residues Tyr757, Tyr758, and Tyr759 each carry the phosphotyrosine; by SRC modification. The span at 759-771 (YDEEGGGEEDQDF) shows a compositional bias: acidic residues. The required for binding CTNND1 and PSEN1 stretch occupies residues 762 to 773 (EGGGEEDQDFDL). Residues Ser774, Ser797, Ser842, Ser844, and Ser850 each carry the phosphoserine modification. Residues 815 to 886 (IDENLKAADS…ADMYGGGEED (72 aa)) are required for binding alpha, beta and.

In terms of assembly, homodimer; disulfide-linked. Component of an E-cadherin/ catenin adhesion complex composed of at least E-cadherin/CDH1, beta-catenin/CTNNB1 or gamma-catenin/JUP, and potentially alpha-catenin/CTNNA1; the complex is located to adherens junctions. Found in a complex composed of CDH1, RAP1A and PKP3; PKP3 acts as a scaffold protein within the complex, the complex is required for CDH1 localization to mature desmosome cell junctions. Interacts with the TRPV4 and CTNNB1 complex. Interacts with CTNND1. The stable association of CTNNA1 is controversial as CTNNA1 was shown not to bind to F-actin when assembled in the complex. Alternatively, the CTNNA1-containing complex may be linked to F-actin by other proteins such as LIMA1. Interaction with PSEN1, cleaves CDH1 resulting in the disassociation of cadherin-based adherens junctions (CAJs). Interacts with AJAP1 and DLGAP5. Interacts with TBC1D2. Interacts with LIMA1. Interacts with CAV1. Interacts with PIP5K1C. Interacts with DDR1; this stabilizes CDH1 at the cell surface and inhibits its internalization. Interacts with RAPGEF2. Interacts with RAB8B. Interacts with KLRG1. Forms a ternary complex composed of ADAM10, CADH1 and EPHA4; within the complex, CADH1 is cleaved by ADAM10 which disrupts adherens junctions. Interacts with SPEF1. Interacts with CTNNB1 and PKP2. Interacts with AMOTL2; the interaction may facilitate binding of radial actin fibers to cell junction complexes. Interacts with DSG3; the interaction is required for CDH1 localization to developing adherens junctions. During apoptosis or with calcium influx, cleaved by a membrane-bound metalloproteinase (ADAM10), PS1/gamma-secretase and caspase-3. Processing by the metalloproteinase, induced by calcium influx, causes disruption of cell-cell adhesion and the subsequent release of beta-catenin into the cytoplasm. The residual membrane-tethered cleavage product is rapidly degraded via an intracellular proteolytic pathway. Cleavage by caspase-3 releases the cytoplasmic tail resulting in disintegration of the actin microfilament system. The gamma-secretase-mediated cleavage promotes disassembly of adherens junctions. During development of the cochlear organ of Corti, cleavage by ADAM10 at adherens junctions promotes pillar cell separation. In terms of processing, N-glycosylation at Asn-641 is essential for expression, folding and trafficking. Addition of bisecting N-acetylglucosamine by MGAT3 modulates its cell membrane location. Post-translationally, ubiquitinated by a SCF complex containing SKP2, which requires prior phosphorylation by CK1/CSNK1A1. Ubiquitinated by CBLL1/HAKAI, requires prior phosphorylation at Tyr-758. O-glycosylated. O-manosylated by TMTC1, TMTC2, TMTC3 or TMTC4. Ser-289 and Thr-513 are O-manosylated by TMTC2 or TMTC4 but not TMTC1 or TMTC3.

Its subcellular location is the cell junction. It localises to the adherens junction. The protein resides in the cell membrane. It is found in the endosome. The protein localises to the golgi apparatus. Its subcellular location is the trans-Golgi network. It localises to the cytoplasm. The protein resides in the desmosome. Cadherins are calcium-dependent cell adhesion proteins. They preferentially interact with themselves in a homophilic manner in connecting cells; cadherins may thus contribute to the sorting of heterogeneous cell types. CDH1 is involved in mechanisms regulating cell-cell adhesions, mobility and proliferation of epithelial cells. Promotes organization of radial actin fiber structure and cellular response to contractile forces, via its interaction with AMOTL2 which facilitates anchoring of radial actin fibers to CDH1 junction complexes at the cell membrane. Plays a role in the early stages of desmosome cell-cell junction formation via facilitating the recruitment of DSG2 and DSP to desmosome plaques. Has a potent invasive suppressor role. It is a ligand for integrin alpha-E/beta-7. Its function is as follows. E-Cad/CTF2 promotes non-amyloidogenic degradation of Abeta precursors. Has a strong inhibitory effect on APP C99 and C83 production. This Rattus norvegicus (Rat) protein is Cadherin-1 (Cdh1).